Here is a 393-residue protein sequence, read N- to C-terminus: Chalcone synthase (393 aa).

Cysteine 164 is a catalytic residue.

The protein belongs to the thiolase-like superfamily. Chalcone/stilbene synthases family.

It catalyses the reaction (E)-4-coumaroyl-CoA + 3 malonyl-CoA + 3 H(+) = 2',4,4',6'-tetrahydroxychalcone + 3 CO2 + 4 CoA. The protein operates within secondary metabolite biosynthesis; flavonoid biosynthesis. The primary product of this enzyme is 4,2',4',6'-tetrahydroxychalcone (also termed naringenin-chalcone or chalcone) which can under specific conditions spontaneously isomerize into naringenin. This is Chalcone synthase (CHS) from Vitis vinifera (Grape).